Here is a 247-residue protein sequence, read N- to C-terminus: Synaptonemal complex central element protein 1-like (247 aa).

Residues serine 71–serine 196 are a coiled coil. The tract at residues glutamate 189–cysteine 247 is disordered. Residues glutamine 220–proline 241 are compositionally biased toward basic and acidic residues.

It belongs to the SYCE family. In terms of tissue distribution, isoform 1 is abundantly expressed in testis and weakly in ovary, it is not found in other tissues. Isoform 2 is expressed in testis and poorly in brain, heart, lung and other examined tissues.

In terms of biological role, may be involved in meiosis. Isoform 1 may be involved in meiosis during spermatogenesis while isoform 2 is probably related to a later stage of meiosis, in the development stage of secondary spermatocytes and spermatids. The polypeptide is Synaptonemal complex central element protein 1-like (Syce1l) (Mus musculus (Mouse)).